The chain runs to 112 residues: Protein FAM32A (112 aa).

Positions 23-58 (TKRKKKKKDKDKAKLLEAMGTSKKNEEEKRRGLDKR) are disordered. A compositionally biased stretch (basic and acidic residues) spans 45 to 58 (KKNEEEKRRGLDKR).

Belongs to the FAM32 family.

The protein localises to the nucleus. In terms of biological role, may induce G2 arrest and apoptosis. May also increase cell sensitivity to apoptotic stimuli. This is Protein FAM32A (FAM32A) from Bos taurus (Bovine).